We begin with the raw amino-acid sequence, 739 residues long: NAD(P)H-quinone oxidoreductase subunit 5, chloroplastic (739 aa).

The next 16 helical transmembrane spans lie at 9-29, 40-60, 89-109, 125-145, 147-167, 185-205, 219-239, 258-278, 286-306, 327-347, 354-374, 396-416, 425-445, 543-563, 602-622, and 717-737; these read WIIP…LILF, WAFQ…YLSI, IDPL…MVLI, FAYM…SNLI, IYIF…FWFT, GDFG…SFEF, NEVN…GAVA, TPIS…FLVA, VIPY…LLGA, LGYM…FHLI, ALLF…VGYS, ITFL…CFWS, WLYS…TAFY, LFPI…GIPF, VVSV…YKPI, and SYLF…YLLF.

This sequence belongs to the complex I subunit 5 family. As to quaternary structure, NDH is composed of at least 16 different subunits, 5 of which are encoded in the nucleus.

Its subcellular location is the plastid. It localises to the chloroplast thylakoid membrane. The enzyme catalyses a plastoquinone + NADH + (n+1) H(+)(in) = a plastoquinol + NAD(+) + n H(+)(out). It carries out the reaction a plastoquinone + NADPH + (n+1) H(+)(in) = a plastoquinol + NADP(+) + n H(+)(out). In terms of biological role, NDH shuttles electrons from NAD(P)H:plastoquinone, via FMN and iron-sulfur (Fe-S) centers, to quinones in the photosynthetic chain and possibly in a chloroplast respiratory chain. The immediate electron acceptor for the enzyme in this species is believed to be plastoquinone. Couples the redox reaction to proton translocation, and thus conserves the redox energy in a proton gradient. This Solanum tuberosum (Potato) protein is NAD(P)H-quinone oxidoreductase subunit 5, chloroplastic (ndhF).